A 591-amino-acid polypeptide reads, in one-letter code: Fanconi anemia group C protein homolog (591 aa).

Belongs to the multisubunit FA complex composed of FANCA, FANCB, FANCC, FANCE, FANCF, FANCG, FANCL/PHF9 and FANCM. This complex may also include HSP70. Interacts with ZBTB32. Upon IFNG induction, interacts with STAT1. Interacts with CDK1. Interacts with EIF2AK2. In terms of tissue distribution, ubiquitous.

It is found in the nucleus. Its subcellular location is the cytoplasm. Functionally, DNA repair protein that may operate in a postreplication repair or a cell cycle checkpoint function. May be implicated in interstrand DNA cross-link repair and in the maintenance of normal chromosome stability. Upon IFNG induction, may facilitate STAT1 activation by recruiting STAT1 to IFNGR1. The protein is Fanconi anemia group C protein homolog (Fancc) of Mus musculus (Mouse).